The sequence spans 579 residues: XK-related protein 7 (579 aa).

The span at 1 to 18 (MAAKSDGAAASAGPDPEG) shows a compositional bias: low complexity. The tract at residues 1–40 (MAAKSDGAAASAGPDPEGAAGGARGSAGGRGEAAAAAGPP) is disordered. The span at 19-31 (AAGGARGSAGGRG) shows a compositional bias: gly residues. 2 consecutive transmembrane segments (helical) span residues 59 to 79 (WVLC…WLAA) and 89 to 109 (YFSL…LLSF). The disordered stretch occupies residues 146 to 165 (GAFRTKEGSPEPGPQPAPSS). Transmembrane regions (helical) follow at residues 260-280 (LLPA…LASY), 314-334 (GLAF…CIVG), 355-375 (GEEI…WFNV), 384-404 (MTLY…FWYS), and 415-435 (LIMV…MCVY). Residues 466-510 (ADAITSPPRSLPRTTGAERDGASAGERAGTPTPPVFQVRPGLPPT) form a disordered region.

It belongs to the XK family.

The protein localises to the cell membrane. In Pan troglodytes (Chimpanzee), this protein is XK-related protein 7 (XKR7).